Reading from the N-terminus, the 227-residue chain is Probable GTP-binding protein EngB (227 aa).

Residues 30-219 (KKPQIIVVGR…MVKINKNVNE (190 aa)) form the EngB-type G domain. Residues 38–45 (GRSNVGKS), 63–67 (GVTLK), 80–83 (DLPG), 160–163 (NKMD), and 197–199 (IGI) contribute to the GTP site. The Mg(2+) site is built by Ser45 and Thr65.

It belongs to the TRAFAC class TrmE-Era-EngA-EngB-Septin-like GTPase superfamily. EngB GTPase family. The cofactor is Mg(2+).

Its function is as follows. Necessary for normal cell division and for the maintenance of normal septation. This Methanococcus aeolicus (strain ATCC BAA-1280 / DSM 17508 / OCM 812 / Nankai-3) protein is Probable GTP-binding protein EngB.